Consider the following 187-residue polypeptide: UPF0340 protein SP_0663 (187 aa).

This sequence belongs to the UPF0340 family.

The sequence is that of UPF0340 protein SP_0663 from Streptococcus pneumoniae serotype 4 (strain ATCC BAA-334 / TIGR4).